The following is a 359-amino-acid chain: Cell division protein ZipA (359 aa).

The Periplasmic portion of the chain corresponds to 1–4; sequence MDLN. A helical membrane pass occupies residues 5 to 25; that stretch reads TILIILGILALVALVAHGLWS. Residues 26 to 359 are Cytoplasmic-facing; the sequence is NRREKSQYFE…AEEEYLAKIK (334 aa). A disordered region spans residues 78–101; that stretch reads PPVQQPLNTEPEPITQETPVRAEP.

Belongs to the ZipA family. Interacts with FtsZ via their C-terminal domains.

The protein resides in the cell inner membrane. Its function is as follows. Essential cell division protein that stabilizes the FtsZ protofilaments by cross-linking them and that serves as a cytoplasmic membrane anchor for the Z ring. Also required for the recruitment to the septal ring of downstream cell division proteins. The polypeptide is Cell division protein ZipA (Mannheimia succiniciproducens (strain KCTC 0769BP / MBEL55E)).